Reading from the N-terminus, the 410-residue chain is 23S rRNA (uracil(747)-C(5))-methyltransferase (410 aa).

Residues C61, C67, C70, and C137 each coordinate [4Fe-4S] cluster. Positions 253, 279, 300, and 341 each coordinate S-adenosyl-L-methionine. The active-site Nucleophile is the C367.

Belongs to the class I-like SAM-binding methyltransferase superfamily. RNA M5U methyltransferase family.

It catalyses the reaction uridine(747) in 23S rRNA + S-adenosyl-L-methionine = 5-methyluridine(747) in 23S rRNA + S-adenosyl-L-homocysteine + H(+). Activated by magnesium ions. Functionally, catalyzes the formation of 5-methyl-uridine at position equivalent to 747 (m5U747) in 23S rRNA (m5U859 in the P.abyssi numbering). The chain is 23S rRNA (uracil(747)-C(5))-methyltransferase from Pyrococcus abyssi (strain GE5 / Orsay).